Here is a 200-residue protein sequence, read N- to C-terminus: Superoxide dismutase [Mn] (200 aa).

Mn(2+)-binding residues include His-27, His-77, Asp-160, and His-164.

Belongs to the iron/manganese superoxide dismutase family. Homodimer. The cofactor is Mn(2+).

The catalysed reaction is 2 superoxide + 2 H(+) = H2O2 + O2. In terms of biological role, destroys superoxide anion radicals which are normally produced within the cells and which are toxic to biological systems. This Rhizobium meliloti (strain 1021) (Ensifer meliloti) protein is Superoxide dismutase [Mn] (sodB).